The following is a 1406-amino-acid chain: Sterol 3-beta-glucosyltransferase (1406 aa).

The tract at residues 83 to 231 is disordered; it reads ARFDESSDSD…IHSSHESSTS (149 aa). Polar residues predominate over residues 110 to 128; that stretch reads GSSNPVNSQTEQRSGSQTS. Over residues 209–231 the composition is skewed to low complexity; sequence SAGRSQNSSQESSIHSSHESSTS. Residues 236–286 enclose the GRAM 1 domain; it reads RLMEMFDFNKPEKVLVEYACSLLQSMLLQGYMYVTEGHICFYAYLPRKSTV. The PH domain occupies 286 to 385; that stretch reads VAIKSGYLHK…WVKALQKVIF (100 aa). 2 disordered regions span residues 457–558 and 576–622; these read ASGH…AESA and LDKR…DGKP. Basic and acidic residues predominate over residues 468 to 478; sequence HADRSPRSDRT. Composition is skewed to polar residues over residues 490–499 and 531–548; these read GTSQPGNGSA and SESI…SAVW. Over residues 576 to 587 the composition is skewed to basic and acidic residues; that stretch reads LDKRACSDERSG. In terms of domain architecture, GRAM 2 spans 730-796; it reads DRFRAHFALP…KDVENVEKEK (67 aa). Ser-917, Arg-918, Asp-920, Ala-1220, His-1222, His-1235, Gly-1239, Thr-1240, Asp-1259, and Gln-1260 together coordinate UDP-alpha-D-glucose. The segment at 1334-1406 is disordered; the sequence is QRSIASSTPF…LTNSIHGAGR (73 aa). A compositionally biased stretch (low complexity) spans 1336-1349; sequence SIASSTPFSPTPSA. Positions 1355–1375 are enriched in acidic residues; it reads QGDDDVEDSEEWTFVGDDNEM. The span at 1376-1387 shows a compositional bias: basic and acidic residues; the sequence is DMSRRMRDRAIS. Positions 1397–1406 are enriched in polar residues; it reads LTNSIHGAGR.

This sequence belongs to the glycosyltransferase 28 family.

It localises to the cytoplasm. The protein resides in the preautophagosomal structure membrane. The catalysed reaction is a sterol + UDP-alpha-D-glucose = a sterol 3-beta-D-glucoside + UDP + H(+). It carries out the reaction ergosterol + UDP-alpha-D-glucose = ergosteryl 3-beta-D-glucoside + UDP + H(+). Functionally, sterol glycosyltransferase responsible for the glycosylation of ergosterol to form ergosterol-glucoside. This is Sterol 3-beta-glucosyltransferase from Aspergillus clavatus (strain ATCC 1007 / CBS 513.65 / DSM 816 / NCTC 3887 / NRRL 1 / QM 1276 / 107).